The following is a 190-amino-acid chain: Putative resolvase R80 (190 aa).

The segment at residues 11–30 (SSVLGVHQRTLYQWDKKGWI) is a DNA-binding region (H-T-H motif). The region spanning 61–190 (LSICYVRVSS…RNGSRKYSNK (130 aa)) is the Resolvase/invertase-type recombinase catalytic domain. Positions 67 to 92 (RVSSNSQKDDLERQIKFMKKKYPNHT) form a coiled coil. The active-site O-(5'-phospho-DNA)-serine intermediate is Ser-69.

Belongs to the site-specific recombinase resolvase family.

Its function is as follows. Resolvase catalyzes the resolution (a site-specific recombination) of the cointegrated replicon to yield the final transposition products. This is Putative resolvase R80 from Acanthamoeba polyphaga mimivirus (APMV).